The primary structure comprises 310 residues: Zinc finger protein 42 homolog (310 aa).

Residues 1-15 (MSQQLKKRAKTRHQK) are compositionally biased toward basic residues. Residues 1-35 (MSQQLKKRAKTRHQKGLGGRAPSGAKPRQGKSSQD) form a disordered region. 4 consecutive C2H2-type zinc fingers follow at residues 188-212 (IACP…LLIH), 217-239 (HVCA…FLVH), 245-269 (FRCT…VRIH), and 275-299 (FVCP…ILTH). Residues lysine 231 and lysine 233 each participate in a glycyl lysine isopeptide (Lys-Gly) (interchain with G-Cter in ubiquitin) cross-link.

This sequence belongs to the krueppel C2H2-type zinc-finger protein family. Polyubiquitinated by RNF12, leading to proteasomal degradation. As to expression, expressed in kidney, epidermal keratinocytes, prostate epithelial cells, bronchial and small airway lung epithelial cells (at protein level). Expressed in malignant kidney and several carcinoma cell lines (at protein level). Expressed in embryonic stem cells, kidney, epidermal keratinocytes, prostate epithelial cells, bronchial and small airway lung epithelial cells. Expressed in embryonal carcinomas, seminomas, malignant kidney and several carcinoma cell lines.

It localises to the nucleus. Its function is as follows. Involved in the reprogramming of X-chromosome inactivation during the acquisition of pluripotency. Required for efficient elongation of TSIX, a non-coding RNA antisense to XIST. Binds DXPas34 enhancer within the TSIX promoter. Involved in ES cell self-renewal. The sequence is that of Zinc finger protein 42 homolog (ZFP42) from Homo sapiens (Human).